The sequence spans 168 residues: 2-C-methyl-D-erythritol 2,4-cyclodiphosphate synthase (168 aa).

The a divalent metal cation site is built by Asp11 and His13. 4-CDP-2-C-methyl-D-erythritol 2-phosphate is bound by residues 11–13 (DVH) and 41–42 (HS). His49 is a binding site for a divalent metal cation. 4-CDP-2-C-methyl-D-erythritol 2-phosphate is bound by residues 63 to 65 (DIG), 68 to 72 (FPDTD), 139 to 142 (TTTE), Phe146, and Arg149.

The protein belongs to the IspF family. Homotrimer. The cofactor is a divalent metal cation.

The catalysed reaction is 4-CDP-2-C-methyl-D-erythritol 2-phosphate = 2-C-methyl-D-erythritol 2,4-cyclic diphosphate + CMP. Its pathway is isoprenoid biosynthesis; isopentenyl diphosphate biosynthesis via DXP pathway; isopentenyl diphosphate from 1-deoxy-D-xylulose 5-phosphate: step 4/6. Involved in the biosynthesis of isopentenyl diphosphate (IPP) and dimethylallyl diphosphate (DMAPP), two major building blocks of isoprenoid compounds. Catalyzes the conversion of 4-diphosphocytidyl-2-C-methyl-D-erythritol 2-phosphate (CDP-ME2P) to 2-C-methyl-D-erythritol 2,4-cyclodiphosphate (ME-CPP) with a corresponding release of cytidine 5-monophosphate (CMP). This Psychrobacter cryohalolentis (strain ATCC BAA-1226 / DSM 17306 / VKM B-2378 / K5) protein is 2-C-methyl-D-erythritol 2,4-cyclodiphosphate synthase.